A 520-amino-acid chain; its full sequence is Sensory neuron membrane protein 2 (520 aa).

Topologically, residues 1 to 7 (MLGKHSK) are cytoplasmic. The helical transmembrane segment at 8-28 (IFFGVSLIFLVIAIVLASWGF) threads the bilayer. The Extracellular segment spans residues 29–468 (QKIVNKQIQK…DSHKLLGYVE (440 aa)). N44, N67, N104, N228, N271, N313, and N342 each carry an N-linked (GlcNAc...) asparagine glycan. Disulfide bonds link C267–C337, C298–C361, and C339–C350. Residues 469 to 489 (VAKWFLLTIAIISVIASAVAV) form a helical membrane-spanning segment. Residues 490 to 520 (ARANALLSWPRNSNSVSFILGPSVTQVNKGN) lie on the Cytoplasmic side of the membrane.

It belongs to the CD36 family. Localizes to cells surrounding the sensory neurons in the antenna. Associate in a ratio of 2:1 with the neurons expressing the other subtype SNMP1.

The protein localises to the cell membrane. Plays an olfactory role that is not restricted to pheromone sensitivity. May play a role in the elimination of lipophilic components from the sensillum lymph. This is Sensory neuron membrane protein 2 from Heliothis virescens (Tobacco budworm moth).